Consider the following 602-residue polypeptide: Potassium-transporting ATPase potassium-binding subunit (602 aa).

4 consecutive transmembrane segments (helical) span residues 5-25 (AMLQ…PLGA), 65-85 (GYAV…YALQ), 136-156 (GLTV…IALI), and 179-199 (LYVL…QGAI). A disordered region spans residues 221-248 (QDAKGNPVLGKDGKPVMEDKTSQTQTLP). Positions 231–241 (KDGKPVMEDKT) are enriched in basic and acidic residues. Helical transmembrane passes span 283–303 (LANF…CFLF), 312–332 (QGWA…VVET), 419–439 (GLYG…LMVG), 458–478 (AITI…AVSL), 523–543 (IMTG…ILAI), and 566–586 (LFVT…YVPA).

It belongs to the KdpA family. The system is composed of three essential subunits: KdpA, KdpB and KdpC.

It is found in the cell inner membrane. Part of the high-affinity ATP-driven potassium transport (or Kdp) system, which catalyzes the hydrolysis of ATP coupled with the electrogenic transport of potassium into the cytoplasm. This subunit binds the periplasmic potassium ions and delivers the ions to the membrane domain of KdpB through an intramembrane tunnel. The sequence is that of Potassium-transporting ATPase potassium-binding subunit from Chromobacterium violaceum (strain ATCC 12472 / DSM 30191 / JCM 1249 / CCUG 213 / NBRC 12614 / NCIMB 9131 / NCTC 9757 / MK).